Consider the following 192-residue polypeptide: Probable nicotinate-nucleotide adenylyltransferase (192 aa).

It belongs to the NadD family.

It carries out the reaction nicotinate beta-D-ribonucleotide + ATP + H(+) = deamido-NAD(+) + diphosphate. The protein operates within cofactor biosynthesis; NAD(+) biosynthesis; deamido-NAD(+) from nicotinate D-ribonucleotide: step 1/1. Functionally, catalyzes the reversible adenylation of nicotinate mononucleotide (NaMN) to nicotinic acid adenine dinucleotide (NaAD). The protein is Probable nicotinate-nucleotide adenylyltransferase of Cereibacter sphaeroides (strain ATCC 17029 / ATH 2.4.9) (Rhodobacter sphaeroides).